The chain runs to 410 residues: Lipoyl synthase, mitochondrial (410 aa).

The transit peptide at 1-29 (MASTTVCSAARIRVASSQVLRSIANTRTY) directs the protein to the mitochondrion. The span at 29–39 (YATTSPESSIP) shows a compositional bias: polar residues. Residues 29–49 (YATTSPESSIPETKPTAKRTP) are disordered. [4Fe-4S] cluster is bound by residues cysteine 129, cysteine 134, cysteine 140, cysteine 160, cysteine 164, cysteine 167, and serine 375. In terms of domain architecture, Radical SAM core spans 143–364 (GGSKAAATAT…KEKAMEMGFL (222 aa)).

The protein belongs to the radical SAM superfamily. Lipoyl synthase family. Requires [4Fe-4S] cluster as cofactor.

The protein localises to the mitochondrion. It catalyses the reaction [[Fe-S] cluster scaffold protein carrying a second [4Fe-4S](2+) cluster] + N(6)-octanoyl-L-lysyl-[protein] + 2 oxidized [2Fe-2S]-[ferredoxin] + 2 S-adenosyl-L-methionine + 4 H(+) = [[Fe-S] cluster scaffold protein] + N(6)-[(R)-dihydrolipoyl]-L-lysyl-[protein] + 4 Fe(3+) + 2 hydrogen sulfide + 2 5'-deoxyadenosine + 2 L-methionine + 2 reduced [2Fe-2S]-[ferredoxin]. It participates in protein modification; protein lipoylation via endogenous pathway; protein N(6)-(lipoyl)lysine from octanoyl-[acyl-carrier-protein]: step 2/2. Its function is as follows. Catalyzes the radical-mediated insertion of two sulfur atoms into the C-6 and C-8 positions of the octanoyl moiety bound to the lipoyl domains of lipoate-dependent enzymes, thereby converting the octanoylated domains into lipoylated derivatives. The polypeptide is Lipoyl synthase, mitochondrial (Arthroderma otae (strain ATCC MYA-4605 / CBS 113480) (Microsporum canis)).